The sequence spans 112 residues: Glutaredoxin-C6 (112 aa).

The region spanning Leu3–Ala103 is the Glutaredoxin domain. A disulfide bridge links Cys23 with Cys26.

The protein belongs to the glutaredoxin family. CPYC subfamily. In terms of processing, the N-terminus is blocked. As to expression, expressed in aleurone layer.

It is found in the cytoplasm. Its function is as follows. Has a glutathione-disulfide oxidoreductase activity in the presence of NADPH and glutathione reductase. Reduces low molecular weight disulfides and proteins. Possesses thioltransferase, dehydroascorbate reductase and GSH-dependent peroxidase activities in vitro. This chain is Glutaredoxin-C6 (GRXC6), found in Oryza sativa subsp. japonica (Rice).